A 463-amino-acid chain; its full sequence is MTTETRSLYSQLPAIDRLLRDSSFLSLRDTYGHTRVVELLRQMLDEAREVIRGSQTLPAWCENWAQEVDARLTKEAQSALRPVINLTGTVLHTNLGRALQAEAAVEAVAQAMRSPVTLEYDLDDAGRGHRDRALAQLLRRITGAEDACIVNNNAAAVLLMLAATASGKEVVVSRGELVEIGGAFRIPDVMRQAGCTLHEVGTTNRTHANDYRQAVNENTALLMKVHTSNYSIQGFTKAIDEAELVALGKELDVPVVTDLGSGSLVDLSQYGLPKEPMPQELIAAGVSLVSFSGDKLLGGPQAGIIVGKKEMIARLQSHPLKRALRADKMTLAALEATLRLYLHPEALSEKLPTLRLLTRSAEVIQIQAQRLQAPLVAHYGAEFAVQVMPCLSQIGSGSLPVDRLPSAALTFTPHDGRGSHLESLAARWRELPVPVIGRIYDGRLWLDLRCLEDEQRFLEMLLK.

Lys-295 carries the N6-(pyridoxal phosphate)lysine modification.

This sequence belongs to the SelA family. Homodecamer; pentamer of dimers. Binds only one seryl-tRNA(Sec) per dimer. Pyridoxal 5'-phosphate is required as a cofactor.

It localises to the cytoplasm. It catalyses the reaction L-seryl-tRNA(Sec) + selenophosphate + H(+) = L-selenocysteinyl-tRNA(Sec) + phosphate. Its pathway is aminoacyl-tRNA biosynthesis; selenocysteinyl-tRNA(Sec) biosynthesis; selenocysteinyl-tRNA(Sec) from L-seryl-tRNA(Sec) (bacterial route): step 1/1. Converts seryl-tRNA(Sec) to selenocysteinyl-tRNA(Sec) required for selenoprotein biosynthesis. This Shigella flexneri serotype 5b (strain 8401) protein is L-seryl-tRNA(Sec) selenium transferase.